Here is a 912-residue protein sequence, read N- to C-terminus: Metabotropic glutamate receptor 4 (912 aa).

Residues 1–32 form the signal peptide; that stretch reads MSGKGGWAWWWARLPLCLLLSLYGSWVPSSLG. At 33-586 the chain is on the extracellular side; it reads KPKGHPHMNS…PIVKLEWDSP (554 aa). A disulfide bond links Cys-67 and Cys-109. Asn-98 carries an N-linked (GlcNAc...) asparagine glycan. L-glutamate contacts are provided by residues Ser-159, 180-182, and Tyr-230; that span reads AST. 7 disulfides stabilise this stretch: Cys-249–Cys-538, Cys-372–Cys-388, Cys-428–Cys-435, Cys-520–Cys-539, Cys-524–Cys-542, Cys-545–Cys-557, and Cys-560–Cys-573. N-linked (GlcNAc...) asparagine glycosylation is present at Asn-301. L-glutamate is bound at residue Asp-312. Position 405 (Lys-405) interacts with L-glutamate. Residues 587–607 traverse the membrane as a helical segment; that stretch reads WAVLPLFLAVVGIAATLFVVV. Over 608 to 624 the chain is Cytoplasmic; that stretch reads TFVRYNDTPIVKASGRE. Residues 625–645 traverse the membrane as a helical segment; it reads LSYVLLAGIFLCYATTFLMIA. Over 646–653 the chain is Extracellular; the sequence is EPDLGTCS. Residues 654–671 form a helical membrane-spanning segment; sequence LRRIFLGLGMSISYAALL. At 672 to 699 the chain is on the cytoplasmic side; sequence TKTNRIYRIFEQGKRSVSAPRFISPASQ. A helical transmembrane segment spans residues 700–720; the sequence is LAITFVLISLQLLCICVWFVV. Residues 721 to 751 lie on the Extracellular side of the membrane; that stretch reads DPSHSVVDFQDQRTLDPRFARGVLKCDISDL. A helical transmembrane segment spans residues 752 to 772; the sequence is SLICLLGYSMLLMVTCTVYAI. At 773-786 the chain is on the cytoplasmic side; that stretch reads KTRGVPETFNEAKP. A helical transmembrane segment spans residues 787–807; that stretch reads IGFTMYTTCIVWLAFIPIFFG. The Extracellular segment spans residues 808 to 826; it reads TSQSADKLYIQTTTLTVSV. Residues 827–847 traverse the membrane as a helical segment; it reads SLSASVSLGMLYMPKVYIILF. Residues 848 to 912 lie on the Cytoplasmic side of the membrane; sequence HPEQNVPKRK…TYVTYTNHAI (65 aa).

The protein belongs to the G-protein coupled receptor 3 family. Interacts with PICK1.

The protein localises to the cell membrane. In terms of biological role, G-protein coupled receptor for glutamate. Ligand binding causes a conformation change that triggers signaling via guanine nucleotide-binding proteins (G proteins) and modulates the activity of down-stream effectors. Signaling inhibits adenylate cyclase activity. The sequence is that of Metabotropic glutamate receptor 4 (Grm4) from Mus musculus (Mouse).